A 459-amino-acid polypeptide reads, in one-letter code: XK-related protein 3 (459 aa).

Transmembrane regions (helical) follow at residues 35–55 (FSII…LYMF), 68–88 (SFTI…LMFF), 97–117 (AALL…LHTI), 169–189 (IQAF…SLTI), 199–219 (LMTF…ILAI), 238–258 (VVMW…FFIA), 264–284 (SLPV…LEFW), 300–320 (MVGT…INFS), 345–365 (ILHY…FRFF), and 377–397 (LIAV…LLFY).

This sequence belongs to the XK family. As to expression, expressed predominantly, if not exclusively, in testis.

It is found in the cell membrane. The polypeptide is XK-related protein 3 (XKR3) (Homo sapiens (Human)).